The sequence spans 269 residues: Tryptophan synthase alpha chain (269 aa).

Catalysis depends on proton acceptor residues E49 and D60.

Belongs to the TrpA family. In terms of assembly, tetramer of two alpha and two beta chains.

The enzyme catalyses (1S,2R)-1-C-(indol-3-yl)glycerol 3-phosphate + L-serine = D-glyceraldehyde 3-phosphate + L-tryptophan + H2O. Its pathway is amino-acid biosynthesis; L-tryptophan biosynthesis; L-tryptophan from chorismate: step 5/5. Functionally, the alpha subunit is responsible for the aldol cleavage of indoleglycerol phosphate to indole and glyceraldehyde 3-phosphate. This chain is Tryptophan synthase alpha chain, found in Actinobacillus pleuropneumoniae serotype 3 (strain JL03).